A 123-amino-acid polypeptide reads, in one-letter code: Large ribosomal subunit protein bL12 (123 aa).

The protein belongs to the bacterial ribosomal protein bL12 family. As to quaternary structure, homodimer. Part of the ribosomal stalk of the 50S ribosomal subunit. Forms a multimeric L10(L12)X complex, where L10 forms an elongated spine to which 2 to 4 L12 dimers bind in a sequential fashion. Binds GTP-bound translation factors.

Its function is as follows. Forms part of the ribosomal stalk which helps the ribosome interact with GTP-bound translation factors. Is thus essential for accurate translation. The chain is Large ribosomal subunit protein bL12 from Dehalococcoides mccartyi (strain ATCC BAA-2100 / JCM 16839 / KCTC 5957 / BAV1).